We begin with the raw amino-acid sequence, 130 residues long: Glycine cleavage system H protein (130 aa).

Residues 25 to 106 (VALIGITDFA…PFDTWMVKLK (82 aa)) enclose the Lipoyl-binding domain. At lysine 66 the chain carries N6-lipoyllysine.

The protein belongs to the GcvH family. The glycine cleavage system is composed of four proteins: P, T, L and H. The cofactor is (R)-lipoate.

Functionally, the glycine cleavage system catalyzes the degradation of glycine. The H protein shuttles the methylamine group of glycine from the P protein to the T protein. This chain is Glycine cleavage system H protein, found in Leptospira biflexa serovar Patoc (strain Patoc 1 / Ames).